The sequence spans 110 residues: Large ribosomal subunit protein uL22 (110 aa).

It belongs to the universal ribosomal protein uL22 family. As to quaternary structure, part of the 50S ribosomal subunit.

Its function is as follows. This protein binds specifically to 23S rRNA; its binding is stimulated by other ribosomal proteins, e.g. L4, L17, and L20. It is important during the early stages of 50S assembly. It makes multiple contacts with different domains of the 23S rRNA in the assembled 50S subunit and ribosome. In terms of biological role, the globular domain of the protein is located near the polypeptide exit tunnel on the outside of the subunit, while an extended beta-hairpin is found that lines the wall of the exit tunnel in the center of the 70S ribosome. This Teredinibacter turnerae (strain ATCC 39867 / T7901) protein is Large ribosomal subunit protein uL22.